We begin with the raw amino-acid sequence, 111 residues long: Ribosome-binding factor A (111 aa).

Belongs to the RbfA family. In terms of assembly, monomer. Binds 30S ribosomal subunits, but not 50S ribosomal subunits or 70S ribosomes.

It is found in the cytoplasm. In terms of biological role, one of several proteins that assist in the late maturation steps of the functional core of the 30S ribosomal subunit. Associates with free 30S ribosomal subunits (but not with 30S subunits that are part of 70S ribosomes or polysomes). Required for efficient processing of 16S rRNA. May interact with the 5'-terminal helix region of 16S rRNA. This Helicobacter pylori (strain J99 / ATCC 700824) (Campylobacter pylori J99) protein is Ribosome-binding factor A.